The primary structure comprises 657 residues: Probable potassium transport system protein Kup (657 aa).

The segment at 1–25 (MGSGPADEEHTVDTEPGVSPPRRTV) is disordered. A run of 12 helical transmembrane segments spans residues 35–55 (VVVGALGVVFGDIGTSPIYTI), 77–97 (VVSLIFWSVMLIVTATYVLLV), 127–147 (TAVLAGLGIFGAALFFGDSMI), 165–185 (PGLEEWIVPITAVIIVALFSV), 196–216 (LFGPVMIVWFVSIGACGVSGI), 234–254 (FFFGHFGIAFFALAAVVLAVT), 275–295 (WLVLVLPACVLSYLGQGALLL), 315–335 (WPMVLLATAATVIASQAVITG), 365–385 (IYVPWINWVLMVSVLTLVFAF), 394–414 (AFGMAVTGTITITTLLFFYIV), 422–442 (LWLVVCGAGCLLAVDLLFLAA), and 447–467 (LVHGAWLPLLIALTAFTVMTT).

This sequence belongs to the HAK/KUP transporter (TC 2.A.72) family.

Its subcellular location is the cell membrane. The catalysed reaction is K(+)(in) + H(+)(in) = K(+)(out) + H(+)(out). Its function is as follows. Transport of potassium into the cell. Likely operates as a K(+):H(+) symporter. The protein is Probable potassium transport system protein Kup of Rhodococcus jostii (strain RHA1).